A 98-amino-acid polypeptide reads, in one-letter code: NADH-ubiquinone oxidoreductase chain 4L (98 aa).

Transmembrane regions (helical) follow at residues 2–22 (TPIF…TLIF), 29–49 (SLLC…LIIL), and 61–81 (ILLL…LVMV).

The protein belongs to the complex I subunit 4L family. In terms of assembly, core subunit of respiratory chain NADH dehydrogenase (Complex I) which is composed of 45 different subunits.

Its subcellular location is the mitochondrion inner membrane. The catalysed reaction is a ubiquinone + NADH + 5 H(+)(in) = a ubiquinol + NAD(+) + 4 H(+)(out). Functionally, core subunit of the mitochondrial membrane respiratory chain NADH dehydrogenase (Complex I) which catalyzes electron transfer from NADH through the respiratory chain, using ubiquinone as an electron acceptor. Part of the enzyme membrane arm which is embedded in the lipid bilayer and involved in proton translocation. This Avahi cleesei (Cleese's woolly lemur) protein is NADH-ubiquinone oxidoreductase chain 4L (MT-ND4L).